A 96-amino-acid chain; its full sequence is MRTKIFAAGTVLTCLMLCAGCTSAPPAPTPVIVPNACPKVSLCPMPGSDPQTNGDLSADIRQLENALARCASQVKMIKHCQDENDAQTRQPAQGAD.

The first 24 residues, 1–24 (MRTKIFAAGTVLTCLMLCAGCTSA), serve as a signal peptide directing secretion. Over 25-96 (PPAPTPVIVP…QTRQPAQGAD (72 aa)) the chain is Periplasmic. Residues 54–78 (GDLSADIRQLENALARCASQVKMIK) adopt a coiled-coil conformation.

Interacts (via C-terminus) with the spanin inner membrane subunit (via C-terminus). Part of the spanin complex which spans the entire periplasmic space. The spanin complex is composed of spanin inner membrane subunit and spanin outer membrane subunit.

It is found in the host cell outer membrane. Its function is as follows. Component of the spanin complex that disrupts the host outer membrane and participates in cell lysis during virus exit. The spanin complex conducts the final step in host lysis by disrupting the outer membrane after holin and endolysin action have permeabilized the inner membrane and degraded the host peptidoglycans. Host outer membrane disruption is possibly due to local fusion between the inner and outer membrane performed by the spanin complex. The protein is Probable spanin, outer lipoprotein subunit (lysC) of Enterobacteriaceae (Bacteriophage P2).